A 176-amino-acid chain; its full sequence is ATP synthase subunit b, chloroplastic (176 aa).

The helical transmembrane segment at 19–39 threads the bilayer; it reads LDLLETNIINIFILIIILIYL.

Belongs to the ATPase B chain family. In terms of assembly, F-type ATPases have 2 components, F(1) - the catalytic core - and F(0) - the membrane proton channel. F(1) has five subunits: alpha(3), beta(3), gamma(1), delta(1), epsilon(1). F(0) has four main subunits: a(1), b(1), b'(1) and c(10-14). The alpha and beta chains form an alternating ring which encloses part of the gamma chain. F(1) is attached to F(0) by a central stalk formed by the gamma and epsilon chains, while a peripheral stalk is formed by the delta, b and b' chains.

It is found in the plastid. Its subcellular location is the chloroplast thylakoid membrane. Functionally, f(1)F(0) ATP synthase produces ATP from ADP in the presence of a proton or sodium gradient. F-type ATPases consist of two structural domains, F(1) containing the extramembraneous catalytic core and F(0) containing the membrane proton channel, linked together by a central stalk and a peripheral stalk. During catalysis, ATP synthesis in the catalytic domain of F(1) is coupled via a rotary mechanism of the central stalk subunits to proton translocation. In terms of biological role, component of the F(0) channel, it forms part of the peripheral stalk, linking F(1) to F(0). The polypeptide is ATP synthase subunit b, chloroplastic (Galdieria sulphuraria (Red alga)).